A 763-amino-acid polypeptide reads, in one-letter code: G protein-regulated inducer of neurite outgrowth 3 (763 aa).

Disordered stretches follow at residues 1–48, 65–111, and 192–268; these read MGTV…IGNV, QACV…APGL, and ENSQ…GATC. The segment covering 27–44 has biased composition (polar residues); it reads ESQSVSPQPAQPDNNASG. Basic and acidic residues predominate over residues 93–104; it reads KTPDDFLLHGSK. A compositionally biased stretch (polar residues) spans 237-250; that stretch reads ENKQPSATALNTTA. 2 positions are modified to phosphoserine: Ser-323 and Ser-359. Disordered regions lie at residues 420 to 452, 471 to 624, and 711 to 737; these read TSSQ…PDFQ, NQGL…PRRG, and VKTQ…GRQH. A compositionally biased stretch (polar residues) spans 437–450; the sequence is KEATSRQPEGTNPD. Basic and acidic residues-rich tracts occupy residues 480-496 and 518-539; these read REPE…KAES and PTDK…KDHA. Over residues 593–609 the composition is skewed to low complexity; that stretch reads SLSLPSDGTGDSSPGSG.

May be involved in neurite outgrowth. The protein is G protein-regulated inducer of neurite outgrowth 3 (Gprin3) of Mus musculus (Mouse).